A 458-amino-acid polypeptide reads, in one-letter code: L-hydantoinase (458 aa).

Residues His-60, His-62, Lys-147, His-183, His-239, and Asp-312 each coordinate Zn(2+). Lys-147 bears the N6-carboxylysine mark.

In terms of assembly, homotetramer. Requires Zn(2+) as cofactor. Post-translationally, carboxylation allows a single lysine to coordinate two zinc ions.

In terms of biological role, rather more predominant for the cleavage of aryl- than for alkyl-hydantoin derivatives. The stereoselectivity of this enzyme depends on the substrate used for bioconversion: strictly L-selective for the cleavage of D,L-5-indolylmethylhydantoin, but D-selective for the hydrolysis of D,L-methylthioethylhydantoin. This is L-hydantoinase (lhyD) from Paenarthrobacter aurescens (Arthrobacter aurescens).